The following is a 360-amino-acid chain: Phospho-N-acetylmuramoyl-pentapeptide-transferase (360 aa).

The next 10 helical transmembrane spans lie at Tyr-21 to Gly-41, Met-74 to Gly-94, Tyr-97 to Tyr-117, Tyr-134 to Ser-154, Val-168 to Ser-188, Gly-199 to Ser-219, Ser-236 to Phe-256, Val-263 to Leu-283, Ile-288 to Val-308, and Val-338 to Lys-358.

Belongs to the glycosyltransferase 4 family. MraY subfamily. Mg(2+) is required as a cofactor.

Its subcellular location is the cell inner membrane. It catalyses the reaction UDP-N-acetyl-alpha-D-muramoyl-L-alanyl-gamma-D-glutamyl-meso-2,6-diaminopimeloyl-D-alanyl-D-alanine + di-trans,octa-cis-undecaprenyl phosphate = di-trans,octa-cis-undecaprenyl diphospho-N-acetyl-alpha-D-muramoyl-L-alanyl-D-glutamyl-meso-2,6-diaminopimeloyl-D-alanyl-D-alanine + UMP. It functions in the pathway cell wall biogenesis; peptidoglycan biosynthesis. In terms of biological role, catalyzes the initial step of the lipid cycle reactions in the biosynthesis of the cell wall peptidoglycan: transfers peptidoglycan precursor phospho-MurNAc-pentapeptide from UDP-MurNAc-pentapeptide onto the lipid carrier undecaprenyl phosphate, yielding undecaprenyl-pyrophosphoryl-MurNAc-pentapeptide, known as lipid I. This Shewanella loihica (strain ATCC BAA-1088 / PV-4) protein is Phospho-N-acetylmuramoyl-pentapeptide-transferase.